The sequence spans 101 residues: Aspartyl/glutamyl-tRNA(Asn/Gln) amidotransferase subunit C (101 aa).

Residues 75–101 (QEALSGAPDAEEQRFRVPRILDEDVAS) are disordered. Residues 85–101 (EEQRFRVPRILDEDVAS) are compositionally biased toward basic and acidic residues.

It belongs to the GatC family. As to quaternary structure, heterotrimer of A, B and C subunits.

It carries out the reaction L-glutamyl-tRNA(Gln) + L-glutamine + ATP + H2O = L-glutaminyl-tRNA(Gln) + L-glutamate + ADP + phosphate + H(+). It catalyses the reaction L-aspartyl-tRNA(Asn) + L-glutamine + ATP + H2O = L-asparaginyl-tRNA(Asn) + L-glutamate + ADP + phosphate + 2 H(+). Its function is as follows. Allows the formation of correctly charged Asn-tRNA(Asn) or Gln-tRNA(Gln) through the transamidation of misacylated Asp-tRNA(Asn) or Glu-tRNA(Gln) in organisms which lack either or both of asparaginyl-tRNA or glutaminyl-tRNA synthetases. The reaction takes place in the presence of glutamine and ATP through an activated phospho-Asp-tRNA(Asn) or phospho-Glu-tRNA(Gln). The polypeptide is Aspartyl/glutamyl-tRNA(Asn/Gln) amidotransferase subunit C (Salinispora arenicola (strain CNS-205)).